Consider the following 428-residue polypeptide: Type II methyltransferase M.TthHB8I (428 aa).

The disordered stretch occupies residues 407 to 428 (RKGNTERRKHGPYTSPESAGSF).

This sequence belongs to the N(4)/N(6)-methyltransferase family.

It catalyses the reaction a 2'-deoxyadenosine in DNA + S-adenosyl-L-methionine = an N(6)-methyl-2'-deoxyadenosine in DNA + S-adenosyl-L-homocysteine + H(+). Its function is as follows. A gamma subtype methylase, recognizes the double-stranded sequence 5'-TCGA-3', methylates A-4 on both strands and protects the DNA from cleavage by the TthHB8I endonuclease. The polypeptide is Type II methyltransferase M.TthHB8I (Thermus thermophilus (strain ATCC 27634 / DSM 579 / HB8)).